The chain runs to 289 residues: Phosphatidylglycerol--prolipoprotein diacylglyceryl transferase (289 aa).

7 helical membrane-spanning segments follow: residues 17-37 (LAVR…ILLG), 57-77 (MLFY…IFFY), 89-109 (IFAV…VIAA), 121-141 (WLVV…AGRI), 174-194 (QLYE…IYSA), 200-220 (GAVS…AEFF), and 235-255 (ISMG…MLVW). Arginine 140 provides a ligand contact to a 1,2-diacyl-sn-glycero-3-phospho-(1'-sn-glycerol).

The protein belongs to the Lgt family.

It is found in the cell inner membrane. It carries out the reaction L-cysteinyl-[prolipoprotein] + a 1,2-diacyl-sn-glycero-3-phospho-(1'-sn-glycerol) = an S-1,2-diacyl-sn-glyceryl-L-cysteinyl-[prolipoprotein] + sn-glycerol 1-phosphate + H(+). It participates in protein modification; lipoprotein biosynthesis (diacylglyceryl transfer). In terms of biological role, catalyzes the transfer of the diacylglyceryl group from phosphatidylglycerol to the sulfhydryl group of the N-terminal cysteine of a prolipoprotein, the first step in the formation of mature lipoproteins. This is Phosphatidylglycerol--prolipoprotein diacylglyceryl transferase from Nitrosospira multiformis (strain ATCC 25196 / NCIMB 11849 / C 71).